Reading from the N-terminus, the 233-residue chain is Putative N-acetylmannosamine-6-phosphate 2-epimerase (233 aa).

The protein belongs to the NanE family.

The catalysed reaction is an N-acyl-D-glucosamine 6-phosphate = an N-acyl-D-mannosamine 6-phosphate. It functions in the pathway amino-sugar metabolism; N-acetylneuraminate degradation; D-fructose 6-phosphate from N-acetylneuraminate: step 3/5. In terms of biological role, converts N-acetylmannosamine-6-phosphate (ManNAc-6-P) to N-acetylglucosamine-6-phosphate (GlcNAc-6-P). The protein is Putative N-acetylmannosamine-6-phosphate 2-epimerase of Yersinia pseudotuberculosis serotype O:3 (strain YPIII).